The sequence spans 118 residues: Ribonuclease P protein component (118 aa).

Belongs to the RnpA family. In terms of assembly, consists of a catalytic RNA component (M1 or rnpB) and a protein subunit.

It catalyses the reaction Endonucleolytic cleavage of RNA, removing 5'-extranucleotides from tRNA precursor.. In terms of biological role, RNaseP catalyzes the removal of the 5'-leader sequence from pre-tRNA to produce the mature 5'-terminus. It can also cleave other RNA substrates such as 4.5S RNA. The protein component plays an auxiliary but essential role in vivo by binding to the 5'-leader sequence and broadening the substrate specificity of the ribozyme. This Rickettsia typhi (strain ATCC VR-144 / Wilmington) protein is Ribonuclease P protein component.